Here is a 668-residue protein sequence, read N- to C-terminus: DNA ligase (668 aa).

NAD(+) is bound by residues 34 to 38 (DAEYD), 83 to 84 (SL), and glutamate 113. Lysine 115 functions as the N6-AMP-lysine intermediate in the catalytic mechanism. NAD(+) is bound by residues arginine 136, glutamate 170, lysine 286, and lysine 310. Positions 404, 407, 422, and 427 each coordinate Zn(2+). The BRCT domain occupies 590-668 (ESDSYFAGKT…EVKMLEELKK (79 aa)).

This sequence belongs to the NAD-dependent DNA ligase family. LigA subfamily. Mg(2+) serves as cofactor. Mn(2+) is required as a cofactor.

It carries out the reaction NAD(+) + (deoxyribonucleotide)n-3'-hydroxyl + 5'-phospho-(deoxyribonucleotide)m = (deoxyribonucleotide)n+m + AMP + beta-nicotinamide D-nucleotide.. Its function is as follows. DNA ligase that catalyzes the formation of phosphodiester linkages between 5'-phosphoryl and 3'-hydroxyl groups in double-stranded DNA using NAD as a coenzyme and as the energy source for the reaction. It is essential for DNA replication and repair of damaged DNA. This Bacillus pumilus (strain SAFR-032) protein is DNA ligase.